We begin with the raw amino-acid sequence, 126 residues long: Small ribosomal subunit protein uS12 (126 aa).

The segment at 1-28 (MPTINQLVRKGRQSETTKSKSPALQDCP) is disordered. 3-methylthioaspartic acid is present on Asp89. Residues 103–126 (DTQGVKDRKQARSKYGAKRAKAGK) form a disordered region. The segment covering 113–126 (ARSKYGAKRAKAGK) has biased composition (basic residues).

It belongs to the universal ribosomal protein uS12 family. As to quaternary structure, part of the 30S ribosomal subunit. Contacts proteins S8 and S17. May interact with IF1 in the 30S initiation complex.

Functionally, with S4 and S5 plays an important role in translational accuracy. Interacts with and stabilizes bases of the 16S rRNA that are involved in tRNA selection in the A site and with the mRNA backbone. Located at the interface of the 30S and 50S subunits, it traverses the body of the 30S subunit contacting proteins on the other side and probably holding the rRNA structure together. The combined cluster of proteins S8, S12 and S17 appears to hold together the shoulder and platform of the 30S subunit. The sequence is that of Small ribosomal subunit protein uS12 from Paraburkholderia phytofirmans (strain DSM 17436 / LMG 22146 / PsJN) (Burkholderia phytofirmans).